We begin with the raw amino-acid sequence, 442 residues long: Hydrolase phmG (442 aa).

The active-site Nucleophile is S259.

This sequence belongs to the AB hydrolase superfamily. FUS2 hydrolase family. Homodimer.

It functions in the pathway mycotoxin biosynthesis. Its function is as follows. Hydrolyase; part of the gene cluster that mediates the biosynthesis of the mycotoxins phomacins, leucine-derived cytochalasans with potent actin polymerization-inhibitory activities and monocot-specific antigerminative activities. The first step in the pathway is catalyzed by the hybrid PKS-NRPS phmA, assisted by the enoyl reductase phmE, that are responsible for fusion of the leucine precursor and the polyketide backbone to produce a 2-pyrrolidone intermediate. The polyketide synthase module (PKS) of phmA is responsible for the synthesis of the polyketide backbone and the downstream nonribosomal peptide synthetase (NRPS) amidates the carboxyl end of the polyketide with the leucine precursor. Because phmA lacks a designated enoylreductase (ER) domain, the required activity is provided the enoyl reductase phmE. Reduction by the hydrolyase phmG, followed by dehydration and intra-molecular Diels-Alder cyclization by the Diels-Alderase phmD then yield the required isoindolone-fused macrocycle. A number of oxidative steps catalyzed by the tailoring cytochrome P450 monooxygenase phmB, the FAD-linked oxidoreductase phmC and the short-chain dehydrogenase/reductase phmF, are further required to afford the final products, phomacin D and phomacin E. This Phaeosphaeria nodorum (strain SN15 / ATCC MYA-4574 / FGSC 10173) (Glume blotch fungus) protein is Hydrolase phmG.